Reading from the N-terminus, the 464-residue chain is Probable acid phosphatase DDB_G0284753 (464 aa).

Residues 1–29 (MFSYFRKSQQKVEENQNGGGGDGRGSGIK) form a disordered region. Positions 17-26 (NGGGGDGRGS) are enriched in gly residues. Residue histidine 81 is the Nucleophile of the active site. Residues 180-202 (SFTDEQEKSPHHSSFLVKPDNEE) are disordered. The Proton donor role is filled by aspartate 347.

Belongs to the histidine acid phosphatase family.

The enzyme catalyses a phosphate monoester + H2O = an alcohol + phosphate. This chain is Probable acid phosphatase DDB_G0284753, found in Dictyostelium discoideum (Social amoeba).